The chain runs to 207 residues: Holliday junction branch migration complex subunit RuvA (207 aa).

Positions 1–68 are domain I; the sequence is MIGYLQGSLA…EDQWLLFGFL (68 aa). Positions 69–147 are domain II; the sequence is QMAERDLFRQ…EWREEAGLLP (79 aa). The tract at residues 148–158 is flexible linker; that stretch reads SATAAPIAAVQ. The domain III stretch occupies residues 158–207; that stretch reads QEDVEMTLLALGYNNREILQALTAIAQENLVQSGQPAEDWIREAIAWLSR.

The protein belongs to the RuvA family. As to quaternary structure, homotetramer. Forms an RuvA(8)-RuvB(12)-Holliday junction (HJ) complex. HJ DNA is sandwiched between 2 RuvA tetramers; dsDNA enters through RuvA and exits via RuvB. An RuvB hexamer assembles on each DNA strand where it exits the tetramer. Each RuvB hexamer is contacted by two RuvA subunits (via domain III) on 2 adjacent RuvB subunits; this complex drives branch migration. In the full resolvosome a probable DNA-RuvA(4)-RuvB(12)-RuvC(2) complex forms which resolves the HJ.

Its subcellular location is the cytoplasm. The RuvA-RuvB-RuvC complex processes Holliday junction (HJ) DNA during genetic recombination and DNA repair, while the RuvA-RuvB complex plays an important role in the rescue of blocked DNA replication forks via replication fork reversal (RFR). RuvA specifically binds to HJ cruciform DNA, conferring on it an open structure. The RuvB hexamer acts as an ATP-dependent pump, pulling dsDNA into and through the RuvAB complex. HJ branch migration allows RuvC to scan DNA until it finds its consensus sequence, where it cleaves and resolves the cruciform DNA. The sequence is that of Holliday junction branch migration complex subunit RuvA from Synechococcus elongatus (strain ATCC 33912 / PCC 7942 / FACHB-805) (Anacystis nidulans R2).